We begin with the raw amino-acid sequence, 166 residues long: CDP-archaeol synthase (166 aa).

4 helical membrane-spanning segments follow: residues 39–59 (IRGF…QMYA), 61–81 (ISGL…LLAI), 104–124 (EWFL…TLLF), and 127–147 (IWML…LTPL).

Belongs to the CDP-archaeol synthase family. Mg(2+) serves as cofactor.

The protein localises to the cell membrane. The enzyme catalyses 2,3-bis-O-(geranylgeranyl)-sn-glycerol 1-phosphate + CTP + H(+) = CDP-2,3-bis-O-(geranylgeranyl)-sn-glycerol + diphosphate. It functions in the pathway membrane lipid metabolism; glycerophospholipid metabolism. In terms of biological role, catalyzes the formation of CDP-2,3-bis-(O-geranylgeranyl)-sn-glycerol (CDP-archaeol) from 2,3-bis-(O-geranylgeranyl)-sn-glycerol 1-phosphate (DGGGP) and CTP. This reaction is the third ether-bond-formation step in the biosynthesis of archaeal membrane lipids. The protein is CDP-archaeol synthase of Methanospirillum hungatei JF-1 (strain ATCC 27890 / DSM 864 / NBRC 100397 / JF-1).